Consider the following 76-residue polypeptide: U1-cyrtautoxin-As1b (76 aa).

Intrachain disulfides connect Cys-23/Cys-37, Cys-30/Cys-51, Cys-36/Cys-66, and Cys-69/Cys-76.

Belongs to the neurotoxin 21 family. As to expression, expressed by the venom gland.

It localises to the secreted. In terms of biological role, neurotoxin with probable ion channel impairing activity. Is both paralytic and lethal, when injected into lepidopteran larvae. This chain is U1-cyrtautoxin-As1b, found in Apomastus schlingeri (Trap-door spider).